A 628-amino-acid polypeptide reads, in one-letter code: WW domain-containing adapter protein with coiled-coil (628 aa).

3 disordered regions span residues 1 to 130 (MVMY…DDWS), 152 to 338 (EKPK…PQSP), and 417 to 532 (NQSP…SARS). Residues 37–49 (SSDHRHDKMRDST) are compositionally biased toward basic and acidic residues. The span at 74 to 84 (GKAKSMHLHRV) shows a compositional bias: basic residues. Low complexity predominate over residues 101 to 121 (NHSAIHSSNSHSSTPSKTSDS). Positions 123 to 156 (YDPADDWSEHISSSGKKYYYNCRTEVSQWEKPKE) constitute a WW domain. Composition is skewed to basic and acidic residues over residues 152–168 (EKPK…KETS) and 176–185 (PKDRDYRREA). Positions 199 to 213 (DTSTMLPQNILSQTS) are enriched in polar residues. The segment covering 214-227 (RHNDRDYRLPRTDS) has biased composition (basic and acidic residues). Composition is skewed to low complexity over residues 230–260 (SAAP…TVQP) and 299–331 (SDKS…TVPV). A compositionally biased stretch (polar residues) spans 420 to 446 (PMSLTSDASSPRSYVSPRISTPQTNTV). The span at 467–486 (GSKQGSSAQTASQQSSAADK) shows a compositional bias: low complexity. Residues 511-532 (PNHNSSTCASSTSAPQNSSARS) are compositionally biased toward polar residues. Residues 599-625 (QATLREQRILFLRQQIKELEKLKNQNS) are a coiled coil.

The protein localises to the nucleus. Its function is as follows. Acts as a linker between gene transcription and histone H2B monoubiquitination at 'Lys-120' (H2BK120ub1). Positive regulator of amino acid starvation-induced autophagy. Positively regulates MTOR activity. May negatively regulate the ubiquitin proteasome pathway. This is WW domain-containing adapter protein with coiled-coil (wac) from Xenopus tropicalis (Western clawed frog).